A 600-amino-acid chain; its full sequence is MSMRTEYCGLVTEHLLGQTVSLCGWVHRRRDHGGVIFIDLRDREGLVQVVCDPDRAEMFAAAEGVRNEFCIQVKGLVRGRPEGTINAGLKSGRIEVLCHELNVLNASVTPPFQLDDDNLSETTRLTHRVLDLRRPQMQHNLRLRYRVAIEARKYLDEQGFIDIETPMLTKSTPEGARDYLVPSRVNAGQFFALPQSPQLFKQLLMVANFDRYYQITKCFRDEDLRADRQPEFTQIDCETSFLGEQEIRDLFEDMIRHIFKTTIGVELDATFPVMPYSEAMARFGSDKPDLRVKLEFTELTDAMKDVDFKVFSTPANTKDGRVAALRVPKGGELTRGDIDGYTEFVRIYGAKGLAWIKVNERAKGRDGLQSPIVKNLHDASIAAILERTGAQDGDIIFFAADRAKVVNDSLGALRLKIGHSEFGKANGLVEAGWKPLWVVDFPMFEYDDEEARYVAAHHPFTSPKDEHLEYLETDPGRCLAKAYDMVLNGWEIGGGSVRIHREEVQSKVFRALKIGPEEAQAKFGFLLDALQYGAPPHGGIAFGLDRIVTMMAGADSIRDVIAFPKTQRAQCLLTQAPSPVDERQLRELHIRLRQPEQPKA.

An L-aspartate-binding site is contributed by Glu174. The tract at residues 198-201 is aspartate; the sequence is QLFK. Position 220 (Arg220) interacts with L-aspartate. Residues 220–222 and Gln229 contribute to the ATP site; that span reads RDE. His457 provides a ligand contact to L-aspartate. Residue Glu491 coordinates ATP. L-aspartate is bound at residue Arg498. 543 to 546 contributes to the ATP binding site; that stretch reads GLDR.

Belongs to the class-II aminoacyl-tRNA synthetase family. Type 1 subfamily. As to quaternary structure, homodimer.

It localises to the cytoplasm. The enzyme catalyses tRNA(Asx) + L-aspartate + ATP = L-aspartyl-tRNA(Asx) + AMP + diphosphate. Functionally, aspartyl-tRNA synthetase with relaxed tRNA specificity since it is able to aspartylate not only its cognate tRNA(Asp) but also tRNA(Asn). Reaction proceeds in two steps: L-aspartate is first activated by ATP to form Asp-AMP and then transferred to the acceptor end of tRNA(Asp/Asn). The sequence is that of Aspartate--tRNA(Asp/Asn) ligase from Burkholderia mallei (strain NCTC 10247).